A 238-amino-acid chain; its full sequence is Small ribosomal subunit protein uS3 (238 aa).

In terms of domain architecture, KH type-2 spans 39 to 107; sequence MREFIHDYAK…ELHLNIVEIR (69 aa). Residues 212–222 show a composition bias toward basic and acidic residues; that stretch reads PQAHDRRHSEA. The disordered stretch occupies residues 212–238; the sequence is PQAHDRRHSEAQEGAAPRPPRRDRERA.

This sequence belongs to the universal ribosomal protein uS3 family. In terms of assembly, part of the 30S ribosomal subunit. Forms a tight complex with proteins S10 and S14.

Binds the lower part of the 30S subunit head. Binds mRNA in the 70S ribosome, positioning it for translation. The sequence is that of Small ribosomal subunit protein uS3 from Cereibacter sphaeroides (strain ATCC 17029 / ATH 2.4.9) (Rhodobacter sphaeroides).